Here is a 542-residue protein sequence, read N- to C-terminus: Phosphoacetylglucosamine mutase (542 aa).

M1 carries the N-acetylmethionine modification. The residue at position 62 (T62) is a Phosphothreonine. Catalysis depends on S64, which acts as the Phosphoserine intermediate. S64, D276, D278, and D280 together coordinate Mg(2+). S64 is modified (phosphoserine). Residues 370 to 372 (EAN), 496 to 500 (RPSGT), and R505 contribute to the substrate site.

The protein belongs to the phosphohexose mutase family. The cofactor is Mg(2+).

The enzyme catalyses N-acetyl-alpha-D-glucosamine 1-phosphate = N-acetyl-D-glucosamine 6-phosphate. It participates in nucleotide-sugar biosynthesis; UDP-N-acetyl-alpha-D-glucosamine biosynthesis; N-acetyl-alpha-D-glucosamine 1-phosphate from alpha-D-glucosamine 6-phosphate (route I): step 2/2. Its function is as follows. Catalyzes the conversion of GlcNAc-6-P into GlcNAc-1-P during the synthesis of uridine diphosphate/UDP-GlcNAc, a sugar nucleotide critical to multiple glycosylation pathways including protein N- and O-glycosylation. This chain is Phosphoacetylglucosamine mutase, found in Mus musculus (Mouse).